Here is a 226-residue protein sequence, read N- to C-terminus: Cytidylate kinase (226 aa).

10 to 18 (GPASSGKST) contributes to the ATP binding site.

It belongs to the cytidylate kinase family. Type 1 subfamily.

It is found in the cytoplasm. The catalysed reaction is CMP + ATP = CDP + ADP. It carries out the reaction dCMP + ATP = dCDP + ADP. The polypeptide is Cytidylate kinase (Enterococcus faecalis (strain ATCC 700802 / V583)).